Here is a 428-residue protein sequence, read N- to C-terminus: Elongation factor 1-alpha (428 aa).

The tr-type G domain maps to 5–225 (KPILNVAFIG…DAFQPPEKPT (221 aa)). Residues 14-21 (GHVDAGKS) form a G1 region. A GTP-binding site is contributed by 14–21 (GHVDAGKS). Residue serine 21 coordinates Mg(2+). The interval 70–74 (GVTID) is G2. Residues 91 to 94 (DCPG) are G3. GTP contacts are provided by residues 91–95 (DCPGH) and 149–152 (NKMD). Positions 149 to 152 (NKMD) are G4. The tract at residues 189-191 (ASL) is G5.

This sequence belongs to the TRAFAC class translation factor GTPase superfamily. Classic translation factor GTPase family. EF-Tu/EF-1A subfamily.

The protein resides in the cytoplasm. The catalysed reaction is GTP + H2O = GDP + phosphate + H(+). Its function is as follows. GTP hydrolase that promotes the GTP-dependent binding of aminoacyl-tRNA to the A-site of ribosomes during protein biosynthesis. This is Elongation factor 1-alpha from Methanococcus maripaludis (strain C5 / ATCC BAA-1333).